Consider the following 133-residue polypeptide: Ribonuclease P protein component (133 aa).

The protein belongs to the RnpA family. As to quaternary structure, consists of a catalytic RNA component (M1 or rnpB) and a protein subunit.

It carries out the reaction Endonucleolytic cleavage of RNA, removing 5'-extranucleotides from tRNA precursor.. Its function is as follows. RNaseP catalyzes the removal of the 5'-leader sequence from pre-tRNA to produce the mature 5'-terminus. It can also cleave other RNA substrates such as 4.5S RNA. The protein component plays an auxiliary but essential role in vivo by binding to the 5'-leader sequence and broadening the substrate specificity of the ribozyme. This is Ribonuclease P protein component from Synechococcus sp. (strain JA-2-3B'a(2-13)) (Cyanobacteria bacterium Yellowstone B-Prime).